We begin with the raw amino-acid sequence, 440 residues long: GTPase Der (440 aa).

2 EngA-type G domains span residues 4–168 (PVVA…PPEK) and 177–352 (IKIA…GRHS). GTP contacts are provided by residues 10 to 17 (GRPNVGKS), 57 to 61 (DTGGL), 120 to 123 (NKVE), 183 to 190 (GRPNVGKS), 230 to 234 (DTAGM), and 295 to 298 (NKWD). Residues 353–437 (MRISTPGLNA…PIRFVLRKKT (85 aa)) form the KH-like domain.

It belongs to the TRAFAC class TrmE-Era-EngA-EngB-Septin-like GTPase superfamily. EngA (Der) GTPase family. Associates with the 50S ribosomal subunit.

In terms of biological role, GTPase that plays an essential role in the late steps of ribosome biogenesis. The protein is GTPase Der of Pelotomaculum thermopropionicum (strain DSM 13744 / JCM 10971 / SI).